A 272-amino-acid chain; its full sequence is Pantothenate synthetase (272 aa).

ATP is bound at residue 27–34 (MGALHNGH). H34 (proton donor) is an active-site residue. Q58 lines the (R)-pantoate pocket. A beta-alanine-binding site is contributed by Q58. 143–146 (GKKD) contacts ATP. Q149 provides a ligand contact to (R)-pantoate. ATP is bound by residues V172 and 180 to 183 (LSSR).

Belongs to the pantothenate synthetase family. In terms of assembly, homodimer.

The protein localises to the cytoplasm. It carries out the reaction (R)-pantoate + beta-alanine + ATP = (R)-pantothenate + AMP + diphosphate + H(+). Its pathway is cofactor biosynthesis; (R)-pantothenate biosynthesis; (R)-pantothenate from (R)-pantoate and beta-alanine: step 1/1. Functionally, catalyzes the condensation of pantoate with beta-alanine in an ATP-dependent reaction via a pantoyl-adenylate intermediate. In Aliarcobacter butzleri (strain RM4018) (Arcobacter butzleri), this protein is Pantothenate synthetase.